Reading from the N-terminus, the 89-residue chain is Protein RALF-like 5 (89 aa).

Positions 1 to 25 (MLKAQVFMFVTVLVFVCVFINSNDA) are cleaved as a signal peptide. 2 disulfides stabilise this stretch: C39/C48 and C61/C67.

This sequence belongs to the plant rapid alkalinization factor (RALF) family.

The protein resides in the secreted. In terms of biological role, cell signaling peptide that may regulate plant stress, growth, and development. Mediates a rapid alkalinization of extracellular space by mediating a transient increase in the cytoplasmic Ca(2+) concentration leading to a calcium-dependent signaling events through a cell surface receptor and a concomitant activation of some intracellular mitogen-activated protein kinases. In Arabidopsis thaliana (Mouse-ear cress), this protein is Protein RALF-like 5 (RALFL5).